The following is a 101-amino-acid chain: Venom protein 214 (101 aa).

The first 16 residues, 1-16, serve as a signal peptide directing secretion; the sequence is MIRYVLVIITCFLVAA.

Post-translationally, contains 3 disulfide bonds. As to expression, expressed by the venom gland.

The protein resides in the secreted. The chain is Venom protein 214 from Lychas mucronatus (Chinese swimming scorpion).